The sequence spans 1300 residues: Insulin receptor-related protein (1300 aa).

Residues 1 to 26 (MARPKLWPWGILLLVSLLSAGFNLDT) form the signal peptide. An N-linked (GlcNAc...) asparagine glycan is attached at Asn-47. Cystine bridges form between Cys-214–Cys-222, Cys-216–Cys-228, Cys-229–Cys-237, Cys-233–Cys-246, Cys-249–Cys-258, Cys-262–Cys-274, Cys-280–Cys-300, Cys-304–Cys-317, and Cys-320–Cys-324. A glycan (N-linked (GlcNAc...) asparagine) is linked at Asn-311. 8 N-linked (GlcNAc...) asparagine glycosylation sites follow: Asn-411, Asn-492, Asn-528, Asn-616, Asn-634, Asn-756, Asn-885, and Asn-898. Fibronectin type-III domains follow at residues 483-603 (QTRT…TLPA) and 607-707 (VPQD…AQEA). A disulfide bridge connects residues Cys-657 and Cys-864. The tract at residues 740–762 (DAGRHRRAIGSPRPGGNSSDFEI) is disordered. Residues 747-921 (AIGSPRPGGN…PEEEDSGGLH (175 aa)) are Extracellular-facing. Residues 818-912 (IPGKLSWEAA…DSVAFYIPGP (95 aa)) form the Fibronectin type-III 3 domain. A helical membrane pass occupies residues 922–943 (ILLTVTPAGLMLLIILAALGFF). Residues 944-1300 (YSRKRNGTLY…CSLQNGGPEH (357 aa)) lie on the Cytoplasmic side of the membrane. The 276-residue stretch at 979–1254 (ISIIRELGQG…SIQKELRPSF (276 aa)) folds into the Protein kinase domain. ATP is bound by residues 985 to 993 (LGQGSFGMV) and Lys-1013. Asp-1115 (proton acceptor) is an active-site residue. Tyr-1145 and Tyr-1146 each carry phosphotyrosine; by autocatalysis. The segment at 1270 to 1300 (GLQPTTDAESSSPPTSKGASDCSLQNGGPEH) is disordered. Positions 1272–1300 (QPTTDAESSSPPTSKGASDCSLQNGGPEH) are enriched in polar residues.

The protein belongs to the protein kinase superfamily. Tyr protein kinase family. Insulin receptor subfamily. Probable tetramer of 2 alpha and 2 beta chains linked by disulfide bonds. The alpha chains contribute to the formation of the ligand-binding domain, while the beta chains carry the kinase domain. Autophosphorylated on tyrosine residues between pH 7.9 and pH 10.5.

Its subcellular location is the membrane. The enzyme catalyses L-tyrosyl-[protein] + ATP = O-phospho-L-tyrosyl-[protein] + ADP + H(+). Receptor with tyrosine-protein kinase activity. Functions as a pH sensing receptor which is activated by increased extracellular pH. Activates an intracellular signaling pathway that involves IRS1 and AKT1/PKB. The polypeptide is Insulin receptor-related protein (INSRR) (Cavia porcellus (Guinea pig)).